A 363-amino-acid polypeptide reads, in one-letter code: Mitochondrial RNA-splicing protein MRS1 (363 aa).

It localises to the mitochondrion. Functionally, function in mitochondrial RNA splicing in the excision of mitochondrial group I introns aI1 and aI5 beta from COX1 and bI3 from COB transcripts and thus would be involved in obtaining the correct structure of the intron, to allow the RNA catalyzed reactions to occur. The polypeptide is Mitochondrial RNA-splicing protein MRS1 (MRS1) (Saccharomyces paradoxus (Yeast)).